Here is a 240-residue protein sequence, read N- to C-terminus: Proteasome subunit alpha (240 aa).

The protein belongs to the peptidase T1A family. The 20S proteasome core is composed of 14 alpha and 14 beta subunits that assemble into four stacked heptameric rings, resulting in a barrel-shaped structure. The two inner rings, each composed of seven catalytic beta subunits, are sandwiched by two outer rings, each composed of seven alpha subunits. The catalytic chamber with the active sites is on the inside of the barrel. Has a gated structure, the ends of the cylinder being occluded by the N-termini of the alpha-subunits. Is capped at one or both ends by the proteasome regulatory ATPase, PAN.

It localises to the cytoplasm. The formation of the proteasomal ATPase PAN-20S proteasome complex, via the docking of the C-termini of PAN into the intersubunit pockets in the alpha-rings, triggers opening of the gate for substrate entry. Interconversion between the open-gate and close-gate conformations leads to a dynamic regulation of the 20S proteasome proteolysis activity. Functionally, component of the proteasome core, a large protease complex with broad specificity involved in protein degradation. The polypeptide is Proteasome subunit alpha (Methanoregula boonei (strain DSM 21154 / JCM 14090 / 6A8)).